Here is a 130-residue protein sequence, read N- to C-terminus: Galectin-2 (130 aa).

The region spanning Lys-4–Glu-130 is the Galectin domain. Trp-65–Glu-71 is a binding site for a beta-D-galactoside.

In terms of assembly, homodimer.

Functionally, this protein binds beta-galactoside. Its physiological function is not yet known. This is Galectin-2 (Lgals2) from Mus musculus (Mouse).